The following is a 235-amino-acid chain: Sugar fermentation stimulation protein homolog (235 aa).

Belongs to the SfsA family.

The chain is Sugar fermentation stimulation protein homolog from Photorhabdus laumondii subsp. laumondii (strain DSM 15139 / CIP 105565 / TT01) (Photorhabdus luminescens subsp. laumondii).